The primary structure comprises 358 residues: Chorismate synthase (358 aa).

The interval 39–61 is disordered; that stretch reads ADIQPFLDKRRPGQSRHTTQRQE. The NADP(+) site is built by arginine 48 and arginine 54. Residues 125–127, 237–238, glycine 284, 299–303, and arginine 325 each bind FMN; these read RSS, NA, and KPTSS.

Belongs to the chorismate synthase family. As to quaternary structure, homotetramer. FMNH2 is required as a cofactor.

It carries out the reaction 5-O-(1-carboxyvinyl)-3-phosphoshikimate = chorismate + phosphate. Its pathway is metabolic intermediate biosynthesis; chorismate biosynthesis; chorismate from D-erythrose 4-phosphate and phosphoenolpyruvate: step 7/7. Functionally, catalyzes the anti-1,4-elimination of the C-3 phosphate and the C-6 proR hydrogen from 5-enolpyruvylshikimate-3-phosphate (EPSP) to yield chorismate, which is the branch point compound that serves as the starting substrate for the three terminal pathways of aromatic amino acid biosynthesis. This reaction introduces a second double bond into the aromatic ring system. The sequence is that of Chorismate synthase from Sphingopyxis alaskensis (strain DSM 13593 / LMG 18877 / RB2256) (Sphingomonas alaskensis).